Here is an 83-residue protein sequence, read N- to C-terminus: Delta-conotoxin-like Ac6.1 (83 aa).

An N-terminal signal peptide occupies residues M1–A22. Positions D23–R51 are excised as a propeptide. 3 disulfide bridges follow: C54–C69, C61–C73, and C68–C78. 4-hydroxyproline is present on residues P57 and P65.

The protein belongs to the conotoxin O1 superfamily. Expressed by the venom duct.

It is found in the secreted. Delta-conotoxins bind to site 6 of voltage-gated sodium channels (Nav) and inhibit the inactivation process. This chain is Delta-conotoxin-like Ac6.1, found in Conus achatinus (Little frog cone).